The chain runs to 79 residues: MAEEGDVDEADVFLAFAQGPSPPRGPVRRALDKAFFIFLALFLTLLMLEAAYKLLWLLLWAKLGDWLLGTPQKEEELEL.

Residues 35 to 55 (FFIFLALFLTLLMLEAAYKLL) form a helical membrane-spanning segment.

Its subcellular location is the membrane. In Homo sapiens (Human), this protein is Small integral membrane protein 40.